A 95-amino-acid polypeptide reads, in one-letter code: MANHPSAKKMIKVIKKRTMINRMRKSRAHNYIKKFMAALAAGNKELMLENFKKAESNLHRCVNKKIIHRNTAARKISRLALKLKTFDLQQQEKAS.

It belongs to the bacterial ribosomal protein bS20 family.

Its function is as follows. Binds directly to 16S ribosomal RNA. In Ehrlichia ruminantium (strain Gardel), this protein is Small ribosomal subunit protein bS20.